The primary structure comprises 229 residues: tRNA (guanine-N(7)-)-methyltransferase (229 aa).

Positions 59, 84, 111, and 134 each coordinate S-adenosyl-L-methionine. Asp-134 is an active-site residue. Substrate is bound at residue Lys-138. Residues 140–145 (KHNKRR) are interaction with RNA. Residues Asp-170 and 207–210 (TKFE) contribute to the substrate site.

It belongs to the class I-like SAM-binding methyltransferase superfamily. TrmB family.

The catalysed reaction is guanosine(46) in tRNA + S-adenosyl-L-methionine = N(7)-methylguanosine(46) in tRNA + S-adenosyl-L-homocysteine. The protein operates within tRNA modification; N(7)-methylguanine-tRNA biosynthesis. Functionally, catalyzes the formation of N(7)-methylguanine at position 46 (m7G46) in tRNA. The protein is tRNA (guanine-N(7)-)-methyltransferase of Saccharophagus degradans (strain 2-40 / ATCC 43961 / DSM 17024).